The sequence spans 602 residues: VIN3-like protein 1 (602 aa).

Residues 1–38 (MDSSSTKSKISHSRKTNKKSNKKHESNGKQQQQQDVDG) form a disordered region. The span at 9 to 22 (KISHSRKTNKKSNK) shows a compositional bias: basic residues. Residues 67–137 (RCSCCVCHNF…CFCCYSCGKV (71 aa)) form a PHD-type zinc finger. The Nuclear localization signal motif lies at 144–151 (WKKQLVAA). The Fibronectin type-III domain maps to 242-340 (VPAACRFHFE…AMCFTKSVEI (99 aa)). The disordered stretch occupies residues 430–470 (LNEEFTPPDSSGGEDNGVPLNSLAEADGGDHDDNCDDAVSN). The tract at residues 502-602 (AISDSNDSEN…RPNNGVMTSH (101 aa)) is VIN3-Interacting Domain (VID).

In terms of assembly, interacts with VIN3 and VIL2. The heterodimer made of VIN3 and VIL1 is required for establishing the vernalization-induced epigenetic silencing of FLC. Component of the plant homeodomain / polycomb repressive complex 2 (PHD-PRC2) large complex during prolonged cold, composed of core PRC2 components (VRN2, EZA1, FIE and MSI1), and three related PHD finger proteins (VIL1, VIL2 and VIN3) that mediates histone H3 trimethylation on 'Lys-27' (H3K27me3). Accumulates in shoot and root apices, and in leaves.

It is found in the nucleus. The protein localises to the nucleus speckle. Its function is as follows. Involved in both the vernalization and photoperiod pathways by regulating expression of the related floral repressors FLOWERING LOCUS C (FLC) and FLOWERING LOCUS M (FLM). Together with VIN3, required during vernalization for the modifications of FLC and FLM chromatin that are associated with an epigenetically silenced state (e.g. chromatin modifications, histone deacetylation, and trimethylated H3 'Lys-4' H3K4me3 and 'Lys-27' H3K27me3) and with acquisition of competence to flower. Promotes flowering in short days (SD=8 hours light/16 hours dark). Associates dynamically at FLC locus; during vernalization, binds to specific sites, but when in warm conditions, distributed along the whole locus. The chain is VIN3-like protein 1 (VIL1) from Arabidopsis thaliana (Mouse-ear cress).